We begin with the raw amino-acid sequence, 361 residues long: S-adenosylmethionine decarboxylase proenzyme (361 aa).

Catalysis depends on residues Glu8 and Glu11. The active-site Schiff-base intermediate with substrate; via pyruvic acid is Ser68. Ser68 carries the pyruvic acid (Ser); by autocatalysis modification. Cys82 serves as the catalytic Proton donor; for catalytic activity. Active-site proton acceptor; for processing activity residues include Ser234 and His247. The tract at residues 341–361 (SCGSPRSTLHRCWSETENEEE) is disordered.

Belongs to the eukaryotic AdoMetDC family. It depends on pyruvate as a cofactor. In terms of processing, is synthesized initially as an inactive proenzyme. Formation of the active enzyme involves a self-maturation process in which the active site pyruvoyl group is generated from an internal serine residue via an autocatalytic post-translational modification. Two non-identical subunits are generated from the proenzyme in this reaction, and the pyruvate is formed at the N-terminus of the alpha chain, which is derived from the carboxyl end of the proenzyme. The post-translation cleavage follows an unusual pathway, termed non-hydrolytic serinolysis, in which the side chain hydroxyl group of the serine supplies its oxygen atom to form the C-terminus of the beta chain, while the remainder of the serine residue undergoes an oxidative deamination to produce ammonia and the pyruvoyl group blocking the N-terminus of the alpha chain.

It carries out the reaction S-adenosyl-L-methionine + H(+) = S-adenosyl 3-(methylsulfanyl)propylamine + CO2. The protein operates within amine and polyamine biosynthesis; S-adenosylmethioninamine biosynthesis; S-adenosylmethioninamine from S-adenosyl-L-methionine: step 1/1. The polypeptide is S-adenosylmethionine decarboxylase proenzyme (SAMDC) (Helianthus annuus (Common sunflower)).